Reading from the N-terminus, the 96-residue chain is RNA-binding protein Hfq (96 aa).

The Sm domain maps to 9 to 68; it reads DPYLNALRRERIPVSIYLVNGIKLQGQIESFDQFVILLKNTVNQMVYKHAISTVVPARSV.

It belongs to the Hfq family. In terms of assembly, homohexamer.

RNA chaperone that binds small regulatory RNA (sRNAs) and mRNAs to facilitate mRNA translational regulation in response to envelope stress, environmental stress and changes in metabolite concentrations. Also binds with high specificity to tRNAs. The chain is RNA-binding protein Hfq from Histophilus somni (strain 129Pt) (Haemophilus somnus).